A 189-amino-acid chain; its full sequence is Elongation factor P (189 aa).

It belongs to the elongation factor P family.

Its subcellular location is the cytoplasm. The protein operates within protein biosynthesis; polypeptide chain elongation. Functionally, involved in peptide bond synthesis. Stimulates efficient translation and peptide-bond synthesis on native or reconstituted 70S ribosomes in vitro. Probably functions indirectly by altering the affinity of the ribosome for aminoacyl-tRNA, thus increasing their reactivity as acceptors for peptidyl transferase. This Sinorhizobium fredii (strain NBRC 101917 / NGR234) protein is Elongation factor P.